A 70-amino-acid chain; its full sequence is Large ribosomal subunit protein eL38 (70 aa).

Belongs to the eukaryotic ribosomal protein eL38 family.

This chain is Large ribosomal subunit protein eL38 (rpl-38), found in Ostertagia ostertagi (Brown stomach worm).